A 473-amino-acid chain; its full sequence is T-box transcription factor TBX6L (473 aa).

Residues 43–217 (LWDKFSSIGT…NNPFAKGFRD (175 aa)) constitute a DNA-binding region (T-box). The segment at 342–361 (RLNPQETHHNSRPKIQLQPP) is disordered.

In terms of tissue distribution, exclusively expressed by ventral mesendoderm.

It is found in the nucleus. Functionally, probable transcriptional regulator involved in developmental processes. This is T-box transcription factor TBX6L (tbx6l) from Danio rerio (Zebrafish).